The following is a 120-amino-acid chain: uncharacterized protein (120 aa).

A helical transmembrane segment spans residues 93–109; it reads LCVGISTTMIIQVLFLL.

The protein resides in the membrane. This is an uncharacterized protein from Saccharomyces cerevisiae (strain ATCC 204508 / S288c) (Baker's yeast).